Here is a 150-residue protein sequence, read N- to C-terminus: Transcriptional repressor NrdR (150 aa).

Residues cysteine 3–cysteine 34 fold into a zinc finger. The 91-residue stretch at valine 49–threonine 139 folds into the ATP-cone domain.

Belongs to the NrdR family. The cofactor is Zn(2+).

Negatively regulates transcription of bacterial ribonucleotide reductase nrd genes and operons by binding to NrdR-boxes. In Clostridium botulinum (strain Alaska E43 / Type E3), this protein is Transcriptional repressor NrdR.